Reading from the N-terminus, the 520-residue chain is Probable cytochrome P450 6v1 (520 aa).

Cysteine 465 is a binding site for heme.

It belongs to the cytochrome P450 family. The cofactor is heme.

It is found in the endoplasmic reticulum membrane. The protein localises to the microsome membrane. Its function is as follows. May be involved in the metabolism of insect hormones and in the breakdown of synthetic insecticides. The polypeptide is Probable cytochrome P450 6v1 (Cyp6v1) (Drosophila melanogaster (Fruit fly)).